Here is a 414-residue protein sequence, read N- to C-terminus: Serpin A3-6 (414 aa).

Positions 1–25 are cleaved as a signal peptide; the sequence is MRTERVSPLLALGILVAGLCSRVHC. Residues N103, N183, N233, N267, and N321 are each glycosylated (N-linked (GlcNAc...) asparagine).

Belongs to the serpin family. Homodimer.

It is found in the cytoplasmic vesicle. The protein localises to the secretory vesicle. The protein resides in the chromaffin granule. Its subcellular location is the secreted. Serine protease inhibitor. The sequence is that of Serpin A3-6 from Bos taurus (Bovine).